A 734-amino-acid chain; its full sequence is Ribosome-releasing factor 2, mitochondrial (734 aa).

The transit peptide at 1–25 (MLQYCLLRRYRFLLRQHAQVIKRCY) directs the protein to the mitochondrion. The tr-type G domain maps to 27 to 303 (GDIRNIGILA…AVNAYLPMPE (277 aa)). GTP-binding positions include 36–43 (AHIDAGKT), 100–104 (DTPGH), and 154–157 (NKMD).

This sequence belongs to the TRAFAC class translation factor GTPase superfamily. Classic translation factor GTPase family. EF-G/EF-2 subfamily.

The protein localises to the mitochondrion. Its function is as follows. Mitochondrial GTPase that mediates the disassembly of ribosomes from messenger RNA at the termination of mitochondrial protein biosynthesis. Not involved in the GTP-dependent ribosomal translocation step during translation elongation. The sequence is that of Ribosome-releasing factor 2, mitochondrial from Drosophila grimshawi (Hawaiian fruit fly).